Here is an 89-residue protein sequence, read N- to C-terminus: Small ribosomal subunit protein uS15 (89 aa).

It belongs to the universal ribosomal protein uS15 family. As to quaternary structure, part of the 30S ribosomal subunit. Forms a bridge to the 50S subunit in the 70S ribosome, contacting the 23S rRNA.

Functionally, one of the primary rRNA binding proteins, it binds directly to 16S rRNA where it helps nucleate assembly of the platform of the 30S subunit by binding and bridging several RNA helices of the 16S rRNA. In terms of biological role, forms an intersubunit bridge (bridge B4) with the 23S rRNA of the 50S subunit in the ribosome. This chain is Small ribosomal subunit protein uS15, found in Pseudomonas fluorescens (strain SBW25).